The primary structure comprises 464 residues: A-type ATP synthase subunit B (464 aa).

This sequence belongs to the ATPase alpha/beta chains family. Has multiple subunits with at least A(3), B(3), C, D, E, F, H, I and proteolipid K(x).

The protein resides in the cell membrane. Functionally, component of the A-type ATP synthase that produces ATP from ADP in the presence of a proton gradient across the membrane. The B chain is a regulatory subunit. This chain is A-type ATP synthase subunit B, found in Methanococcus aeolicus (strain ATCC BAA-1280 / DSM 17508 / OCM 812 / Nankai-3).